The following is a 384-amino-acid chain: MTQPAIYLDNNATTRVFPEVVAAMLPYFTEHFGNASSGHGFGAQAGLGLRKARLAVAALIGAASEQEILFTSGGTEANTTAIRSALAVQDGRREIIISAVEHPAILMLAADLEKTEGVRVHRIPVDHLGRLDLAAYRAALSDRVAVASIMWANNRYDLPVPQLAAEAHAAGALFHTDAVQAVGKLPMSLADTEIDMLSLSGHKFHGPKGVGALYLRKGVAFRPLLRGGKQERGRRAGTENVPALVGMGLAAEIVAARMAADLSRIATLRDWLESGILALGGCQRLGDPANRLANTCTLAFDRIDSEAVLTKLARAGIAISTGSACASGAMEPSHVTRAMAVPFTAAHGVVRFSLSADTTAAELSRVLAILPEILAELRPVPVTA.

Pyridoxal 5'-phosphate is bound by residues 74-75, Asn-154, Gln-180, and 200-202; these read GT and SGH. At Lys-203 the chain carries N6-(pyridoxal phosphate)lysine. Thr-238 lines the pyridoxal 5'-phosphate pocket. Cys-325 acts as the Cysteine persulfide intermediate in catalysis. Cys-325 is a binding site for [2Fe-2S] cluster.

Belongs to the class-V pyridoxal-phosphate-dependent aminotransferase family. NifS/IscS subfamily. As to quaternary structure, homodimer. The cofactor is pyridoxal 5'-phosphate.

It catalyses the reaction (sulfur carrier)-H + L-cysteine = (sulfur carrier)-SH + L-alanine. In terms of biological role, catalyzes the removal of elemental sulfur atoms from cysteine to produce alanine. Seems to participate in the biosynthesis of the nitrogenase metalloclusters by providing the inorganic sulfur required for the Fe-S core formation. The sequence is that of Cysteine desulfurase from Rhodobacter capsulatus (Rhodopseudomonas capsulata).